The chain runs to 740 residues: Glycerol dehydrogenase large subunit (740 aa).

The N-terminal stretch at 1 to 29 is a signal peptide; sequence MRRPYLLATAAGLALACSPLIAHAQFAPA. 2 disordered regions span residues 28 to 105 and 442 to 468; these read PAGA…GDWV and LPVEERPAPSPGVIPGDPRSPTQPWSV. Positions 34 to 43 are enriched in low complexity; the sequence is EPSSSVPGPG. Positions 46–58 are enriched in polar residues; sequence SEPTENSPKSQSY.

The protein belongs to the bacterial PQQ dehydrogenase family. It depends on pyrroloquinoline quinone as a cofactor.

It localises to the secreted. The catalysed reaction is glycerol + A = dihydroxyacetone + AH2. Functionally, catalyzes the oxidation of glycerol to glycerone. Also acts, more slowly, on a number of other polyols including D-sorbitol, D-arabinitol, D-mannitol, meso-erythritol, adonitol and propylene glycol. The sequence is that of Glycerol dehydrogenase large subunit (sldA) from Gluconobacter thailandicus.